A 321-amino-acid chain; its full sequence is Coiled-coil domain-containing protein 42-like 1 (321 aa).

Coiled-coil stretches lie at residues 36–144 (IRRL…EKCH) and 202–229 (IVQF…WELR).

This sequence belongs to the CFAP73 family.

In Xenopus laevis (African clawed frog), this protein is Coiled-coil domain-containing protein 42-like 1.